A 487-amino-acid chain; its full sequence is Serine/threonine-protein phosphatase 2A activator 1 (487 aa).

2 disordered regions span residues Met1 to Thr28 and Gly426 to Glu487.

This sequence belongs to the PTPA-type PPIase family.

The protein resides in the cytoplasm. Its subcellular location is the nucleus. It catalyses the reaction [protein]-peptidylproline (omega=180) = [protein]-peptidylproline (omega=0). PPIases accelerate the folding of proteins. It catalyzes the cis-trans isomerization of proline imidic peptide bonds in oligopeptides. Acts as a regulatory subunit for PP2A-like phosphatases modulating their activity or substrate specificity, probably by inducing a conformational change in the catalytic subunit, a direct target of the PPIase. Can reactivate inactive phosphatase PP2A-phosphatase methylesterase complexes (PP2Ai) in presence of ATP and Mg(2+) by dissociating the inactive form from the complex. This is Serine/threonine-protein phosphatase 2A activator 1 (RRD1) from Mycosarcoma maydis (Corn smut fungus).